The primary structure comprises 461 residues: MTKKTWSDRFEGTLHPAIALFNASIGFDIELIEYDLDGSIAHGKMLAKTGIISPGEAEQLVQGLEQIRQEYRAGNFNPGVDQEDVHFAVERRLTELVGDVGKKLHTARSRNDQVGTDVRLYLRAQIDDIRQRLRDFQAVLLQLAETNVETLIPGYTHLQRAQPVSLAHHLLAYFQMAQRDWQRLGEIRARTNVSPLGSGALAGTTFPIDRHYSAELLGFAGVYANSLDGVSDRDFAIEFLNAASLIMVHLSRLSEEMILWASQEFSFISLTDSCATGSSIMPQKKNPDVPELIRGKAGRVMGHLQGMLVLMKGLPLAYNKDLQEDKEALFDAVKTVQVSLEAMTILLDEGIVFRQERLAEAVAEDFSNATDVADYLAAKGVPFREAYNLVGKVVKTSLAAGKLLKDLTLAEWQALHPAFEEDIYQAITPQQVVAARNSYGGTGFEQVKMAIANAKAELSQT.

The protein belongs to the lyase 1 family. Argininosuccinate lyase subfamily.

The protein localises to the cytoplasm. It catalyses the reaction 2-(N(omega)-L-arginino)succinate = fumarate + L-arginine. It participates in amino-acid biosynthesis; L-arginine biosynthesis; L-arginine from L-ornithine and carbamoyl phosphate: step 3/3. Its activity is regulated as follows. Strongly inhibited by L-arginine. Inhibitory effects are lowered at pH 7.0 compared to those at pH 8.0. At 45 degrees Celsius and pH 8.0, activity decreases to 94%, 74% and 37% in the presence of 0.6 mM, 2.8 mM and 10 mM arginine, respectively. Activity also decreases to 86% in the presence of 10 mM sodium succinate or sodium citrate. Activity does not decrease in the presence of 1 mM or 10 mM L-lysine, which has a similar structure to arginine. Catalyzes the last step of arginine biosynthesis, the conversion of argininosuccinate into L-arginine and fumarate. In Synechocystis sp. (strain ATCC 27184 / PCC 6803 / Kazusa), this protein is Argininosuccinate lyase.